We begin with the raw amino-acid sequence, 784 residues long: Probable aminopeptidase 1 (784 aa).

Residues E103 and 236–240 (GAMEN) each bind substrate. H271 contacts Zn(2+). Catalysis depends on E272, which acts as the Proton acceptor. Zn(2+) contacts are provided by H275 and E294.

It belongs to the peptidase M1 family. It depends on Zn(2+) as a cofactor.

The protein localises to the cytoplasm. The protein is Probable aminopeptidase 1 (ape1) of Saccharolobus solfataricus (strain ATCC 35092 / DSM 1617 / JCM 11322 / P2) (Sulfolobus solfataricus).